Consider the following 65-residue polypeptide: Photosystem II reaction center protein J (65 aa).

Residues 35–55 form a helical membrane-spanning segment; it reads LWLVATAGGIAVIFVLGIFFY.

Belongs to the PsbJ family. In terms of assembly, PSII is composed of 1 copy each of membrane proteins PsbA, PsbB, PsbC, PsbD, PsbE, PsbF, PsbH, PsbI, PsbJ, PsbK, PsbL, PsbM, PsbT, PsbX, PsbY, Psb30/Ycf12, peripheral proteins PsbO, CyanoQ (PsbQ), PsbU, PsbV and a large number of cofactors. It forms dimeric complexes.

It localises to the cellular thylakoid membrane. Functionally, one of the components of the core complex of photosystem II (PSII). PSII is a light-driven water:plastoquinone oxidoreductase that uses light energy to abstract electrons from H(2)O, generating O(2) and a proton gradient subsequently used for ATP formation. It consists of a core antenna complex that captures photons, and an electron transfer chain that converts photonic excitation into a charge separation. The polypeptide is Photosystem II reaction center protein J (Prochlorococcus marinus (strain MIT 9312)).